The sequence spans 394 residues: MVVFSKTAALVLGLSTAVSAAPAPTRKGFTINQIARPANKTRTVNLPGLYARSLAKFGGTVPQSVKEAASKGSAVTTPQNNDEEYLTPVTVGKSTLHLDFDTGSADLWGFSDELPSSEQTGHDLYTPSSSATKLSGYSWDISYGDGSSASGDVYRDTVTVGGVTTNKQAVEAASKISSEFVQDTANDGLLGLAFSSINTVQPKAQTTFFDTVKSQLDSPLFAVQLKHDAPGVYDFGYIDDSKYTGSITYTDADSSQGYWGFSTDGYSIGDGSSSSSGFSAIADTGTTLILLDDEIVSAHYEQVSGAQESYEAGGYVFSCSTDLPDFTVVIGDYKAVVPGKYINYAPVSTGSSTCYGGIQSNSGLGLSILGDVFLKSQYVVFNSEGPKLGFAAQA.

A signal peptide spans 1–20 (MVVFSKTAALVLGLSTAVSA). Residues 21–69 (APAPTRKGFTINQIARPANKTRTVNLPGLYARSLAKFGGTVPQSVKEAA) constitute a propeptide, activation peptide. Positions 85–391 (YLTPVTVGKS…NSEGPKLGFA (307 aa)) constitute a Peptidase A1 domain. Active-site residues include Asp-101 and Asp-283. A disulfide bridge links Cys-319 with Cys-354.

Belongs to the peptidase A1 family.

It localises to the secreted. The enzyme catalyses Hydrolysis of proteins with broad specificity. Generally favors hydrophobic residues in P1 and P1', but also accepts Lys in P1, which leads to activation of trypsinogen. Does not clot milk.. In terms of biological role, secreted aspartic endopeptidase that allows assimilation of proteinaceous substrates. The scissile peptide bond is attacked by a nucleophilic water molecule activated by two aspartic residues in the active site. Shows a broad primary substrate specificity. Favors hydrophobic residues at the P1 and P1' positions, but also accepts a lysine residue in the P1 position, leading to the activation of trypsinogen and chymotrypsinogen A. The sequence is that of Aspergillopepsin-1 from Aspergillus niger.